A 257-amino-acid chain; its full sequence is NAD kinase (257 aa).

Asp46 functions as the Proton acceptor in the catalytic mechanism. NAD(+) is bound by residues 46-47 (DG), 116-117 (NE), Asp146, Ala154, 157-162 (TAYNLS), and Asn218.

This sequence belongs to the NAD kinase family. A divalent metal cation serves as cofactor.

The protein localises to the cytoplasm. The catalysed reaction is NAD(+) + ATP = ADP + NADP(+) + H(+). Involved in the regulation of the intracellular balance of NAD and NADP, and is a key enzyme in the biosynthesis of NADP. Catalyzes specifically the phosphorylation on 2'-hydroxyl of the adenosine moiety of NAD to yield NADP. The chain is NAD kinase from Brucella melitensis biotype 1 (strain ATCC 23456 / CCUG 17765 / NCTC 10094 / 16M).